Here is a 104-residue protein sequence, read N- to C-terminus: Large ribosomal subunit protein uL24 (104 aa).

It belongs to the universal ribosomal protein uL24 family. As to quaternary structure, part of the 50S ribosomal subunit.

In terms of biological role, one of two assembly initiator proteins, it binds directly to the 5'-end of the 23S rRNA, where it nucleates assembly of the 50S subunit. Functionally, one of the proteins that surrounds the polypeptide exit tunnel on the outside of the subunit. This is Large ribosomal subunit protein uL24 from Proteus mirabilis (strain HI4320).